The following is a 315-amino-acid chain: Protein sprouty homolog 2 (315 aa).

A compositionally biased stretch (polar residues) spans 1 to 15 (MEARAQSGNGSQPLL). 2 disordered regions span residues 1–39 (MEAR…QQVH) and 51–140 (NTNE…GSSF). The span at 20 to 32 (DGGRQRGEPDPRD) shows a compositional bias: basic and acidic residues. The span at 108–140 (SRSISTVSSGSRSSTRTSTSSSSSEQRLLGSSF) shows a compositional bias: low complexity. A required for interaction with CAV1 region spans residues 118–315 (SRSSTRTSTS…VPPRNFEKPT (198 aa)). The SPR domain occupies 177–291 (RCEDCGKCKC…CYDRVNRPGC (115 aa)). Residues 178–315 (CEDCGKCKCK…VPPRNFEKPT (138 aa)) form a required for interaction with TESK1 region.

Belongs to the sprouty family. Forms heterodimers with SPRY1. Forms a tripartite complex containing GAB1, METTL13 and SPRY2. Within the complex interacts with METTL13. Interacts with RAF1. Interacts (via C-terminus) with TESK1 (via C-terminus); the interaction disrupts SPRY2 interaction with GRB2, potentially via disruption of SPRY2 serine dephosphorylation. Interacts with PPP2R1A/PP2A-A and PPP2CA/PP2A-C; the interaction with PPP2CA/PP2A-C is inhibited by interaction with TESK1, possibly by vesicular sequestration of SPRY2. Inhibition of the interaction with the serine/threonine-protein phosphatase 2A (PP2A) holoenzyme results in loss of PP2A-mediated dephosphorylation, resulting in the loss of SPRY2 interaction with GRB2. Interacts with GRB2. Interacts with CBL/C-CBL; the interaction inhibits CBL-mediated ubiquitination of EGFR. Interacts (via C-terminus) with CAV1 (via C-terminus). Cleaved at Pro-144 by the prolyl endopeptidase FAP (seprase) activity (in vitro).

Its subcellular location is the cytoplasm. The protein resides in the cytoskeleton. It is found in the cell projection. It localises to the ruffle membrane. Functionally, antagonist of fibroblast growth factor (FGF) pathways via inhibition of FGF-mediated phosphorylation of ERK1/2. Thereby acts as an antagonist of FGF-induced retinal lens fiber differentiation, may inhibit limb bud outgrowth and may negatively modulate respiratory organogenesis. Inhibits TGFB-induced epithelial-to-mesenchymal transition in retinal lens epithelial cells. Inhibits CBL/C-CBL-mediated EGFR ubiquitination. This is Protein sprouty homolog 2 (SPRY2) from Macaca fascicularis (Crab-eating macaque).